An 835-amino-acid polypeptide reads, in one-letter code: MACSMANAVRPGLSDLPEGVDLSNPKEVRSLLIKLTHARKSTVYDTKIRRLHGVIVNSIMENYNSAEGELDMAITPLIPSHPDYAFLAGRVSAYMTQINTPKTFTDAVYGIQMAVGETNGFRSPMKPVKGGLSDEIVDFVNEHGARLDGMIDDVRDYSHNYMGITGLLNGVAIKVNKKLYERPQYVFMRVAMAMTDLSSETALEDIWQTYMLISGQCLSMASPVLFNGGTSSSNTASCFLLDMGDNMVSITKKVAQTMTLIAKNGGIGINFSKLRATGSKIGMAGKSSGIGGKLNLFDRVAQSVDQGENKRPGAIAGYLTDWHADMYDWLYSRYSGSGNEVNKRHVLNMGLVMSDLFMERVENDKEWSLFSPNDVVGLEELYGEKFVRAYRAHEANPKIKRTTVSARKLFSDIANMMWSTGEPYILFKDAVNERSNHKHLGTIKNSNLCCEIVQYCDTNEIAVCNLATICVSNFVNVETGEIDFEGIADAAGVACKGINNLIDKQNYDLGNEQLMRLADERTEEVVEVNGIKFDAKYNLVSYSNLKHRPQGIGMQGLHDVFMKLKIPYDSEMAFRLAALIQEAIYYGAVRESVKIAEEKGPYPSYYWDNNTHREGKLQFDFLEGFDRDRDLTHELFNWREVLKKFEKFGINNSVVTAQPPSASSSQLNDNVESIEAITSNRFTKGIKDGKFIIINKHLQKDLEDLGMWDAQMVGDIEANDGSIQNIERIPKNIREIYKTAREIDHKAVVKICAAIQPFIDQTISKNMFVPKNVDNPVQLIMENVILGHKMKLKTGMYYTRGIPAMKQQNFGKMNFQDKDIGKPVPELVDCEACSA.

Substrate-binding positions include Ser-222, 237 to 238, Gly-266, 447 to 451, and 660 to 664; these read SC, NLCCE, and PSASS. A disulfide bridge links Cys-238 with Cys-464. Asn-447 functions as the Proton acceptor in the catalytic mechanism. Cys-449 serves as the catalytic Cysteine radical intermediate. The active-site Proton acceptor is the Glu-451.

This sequence belongs to the ribonucleoside diphosphate reductase large chain family. As to quaternary structure, heterotetramer composed of a homodimer of the large subunit (R1) and a homodimer of the small subunit (R2). Larger multisubunit protein complex are also active, composed of (R1)n(R2)n.

It catalyses the reaction a 2'-deoxyribonucleoside 5'-diphosphate + [thioredoxin]-disulfide + H2O = a ribonucleoside 5'-diphosphate + [thioredoxin]-dithiol. Functionally, ribonucleoside-diphosphate reductase holoenzyme provides the precursors necessary for viral DNA synthesis. Allows virus growth in non-dividing cells. Catalyzes the biosynthesis of deoxyribonucleotides from the corresponding ribonucleotides. This is Ribonucleoside-diphosphate reductase large subunit from Magallana gigas (Pacific oyster).